Here is a 2586-residue protein sequence, read N- to C-terminus: MTTSTLLFVLAFVAGGLAAPWGADVPRCSTECPVTGSPKLAYQPDKTYAYAYSGKSTVQLKGVDNGDTETEWTAGVDLTWISPCDMAISFRNTKMDGARGPTAARTLERYPLVVAVVDGRVQHVCAHPEDEAWAINLKKGVASAFQNSIPSLSAVSSGITVTETDVVGKCPTKYEIETEGEKVIVVKEKNHRHCQERYPTPAALPAPWLKAPLPIEESKSQCRQEIANGIYTAITCQDKNIVRPAIGIYKYVEASQYSTLRFISESSDTSAISGIPSGELNIESLLYNHETMKDPQLAPELDELMKEICDKTKDTVEAEAGALVAKALHVLRRIPDTVVVETAQKVRQGHYCSDSARLESIFLDAVAFIHESGAVKVMVNEIENGRATGGRLALYTAALYLIPRPNIEAVKALTPLFESPRPMPSLLLAAATMVNHYCRHTPACYEKAPVARIAEILANRVQTHCSPSAGVEDNEVALAIFKTIGNMGVATPAVTRAAVHCIEVEGLETSVRVAAAEAFRQANCFRPAVEKLVDIAVRPAFETEVRIASYLAAVRCAEQEHLETIIEKISKEENTQVRGFVLGHLINIQESTCPAKENLRYLLANVIPTDFERDFRKFSRNIDVAYHAPAFGMGAGLESNIIYAPGSFVPRAVNLKMKADVDETHMDIAEIGARFVGIESIIEEPLGPQGYLRTATFGKIMEDITGFAGEKGYKVMEQLKHTLRTRRSIDSSVIADFFGKLYGKSRSHTHAELFARFMGHEITYADVAGSLKGVTADTLIETFFSFFENSLEHMKDLNLNTARTAQLSMDYSLPTIQGTPLRLRLAGTAVAGLKMEGNVNIAQILSDLGNSQTGVKFFPGLSVHATGFVGFDWLLARVGIEMQNTISSATGAAIKIRTTENKKIEMELEVPEKMELLNIKAETYLVKAVGKKMTEISPSSMRDVRIQRNSCIGALEPVFGLKVCYDMNIPDVFRANALPLGEPAIAKLYVEKADPSMRGYLVTAAIKNKRGNKVIKMNVEAAGASTPRRAEMTLSYTKEEGSHIVSAKLDSSSIAAGVWTTLTNEQGHKAMETYVNFNYGQIAISRGIKLEAIAREASVGEEFQVNVFSSGTRSFPSESHIVEARFIKKTSGPEFNVDVICRTKNALAELFDLNIEVGADFMKFSPKNLYPARYIPKTRIVLPVNLRKMEINAATAAWKLISYIRAGSQSGGSREFISALKLAKGRKDFISVQATHTIEGTFPQNIIIKNVATAEVGRSSYKAMYDLFYHSEKMGASLEVLQAAGNEKVAHLEAIYELSGSKYCTKFLAEIPGYIQPVKVEAGIEQGAEGRYTLESAITYGQRTVLEASGPIMARFSSKIAKLQANIKVRAMASEPYIIGANVAFGSKKQMIAMEIKGRSEAVIGLEWKMVRESSEKTTVGIVFVLPALIENKIDAEITDGLIHVSFNNLVLPKTSSRRRVKGFADVHIAEKKANVEFSWDADNAPEKKLVLDASLISSSANPGHAEIHGNIVIAGEPFHAKLVLTAANLVEHMEGENGFKLILTTPSQKTIVLGASCDVQVAGATTKVISTVEYKNMKDRKYKYASVIAYEKLGGPFDYAVEAKVTYKQPGTAEIKLGTAVKHHWTPEEHVVAVRVEADAPILKTPATIEFSIHNAPNAFVGFCKIERNAPATVFEWNVQITPEGGIEAVEAGVDMKAIIEVLKIVHAAATLQEESYETYGPHTSQYQYRFTRPSPTSYTMQMRTPTRTMEGRAKLSPRESGIKFYPNKGKTESKYEIGYKANHEGRWGGHASKLEVRMNHPVLPKPIMAAVQYTVAEETTKGTIELDIFPEEANKITGSLETQRISENAIRAEAFLTSRMLKVNPKAIITAAYAPETVAFDVVFHKTPSAAPIFAIAAKYDKTAAHNAAATFTVKMEERPVFEITAVTEPEEAATCNGIRMRAVAYAATFGKYNVISKMCRPAFIEVTAMRPGGAKEYIAKLGLRYPDAAEAGVYVASGRAGETHGVAVAAVKLASPTMLKVEMAYEPQEAEAIINEMTEEFEKIAASFTSVEMEVVEFLKQEAAAKGIQFPSSQLVNLLGVAKEEIAEIYRDIVSEAIIFDTEILGDILGSPVVSFISRVYFGVWSEIIHLQHHLSVSLIQTIERFQQELGSISEILMEVVMTAARMAETGEVPGVVFDALEEIKATKVFRIVRREVDAILEEYPEEYEAVKHIVHNVVAILKRDVGIVRERLMEIPAVLKIIDYTMYHFHSERAFAAEAEKLVSLMLNELLFVSMEREGNGVAVRIPLHRPLYSLTQVAQEAVPNPVTMLENLIFAYVDYIPIPVSDAIWAFYNLVPRYITDVLPPYPRTATVVGGSEILTFSGLVVRAPRSPCKVVLAAHGSHRLMMSHPQASAPAQFELKTPAATVMIKPDFEVVVNGQPLAGSQQTIGNVRIVNTAEHIEVGCPLMKVVVAKAGEAVAVEASGWVFGRVAGLLGPNNGEIAHDRLMPSGAAASNPRDLVAAWQEDRQCSTPEVPRAETTVARLIQCEALLGIRSRCNPVVHPQPFIKMCHAAHKACDAAQAYRTVCSLRGVGEVFPLGC.

A signal peptide spans 1 to 18 (MTTSTLLFVLAFVAGGLA). One can recognise a Vitellogenin domain in the interval 42-653 (YQPDKTYAYA…APGSFVPRAV (612 aa)). 2 cysteine pairs are disulfide-bonded: C170–C194 and C2378–C2515. Residues 2353–2516 (RTATVVGGSE…AAWQEDRQCS (164 aa)) enclose the VWFD domain.

In terms of processing, glycosylated. May be modified covalently by lipidation. Expressed in the ovary and hepatopancrease of vitellogenic females. Not expressed in the muscle, heart and intestine of female or in the hepatopancrease of the male. Detected in the ovary and hemolymph of female (at protein level). Not detected in the female hepatopancreas or in the male hemolymph and testis (at protein level).

In terms of biological role, precursor of the egg-yolk proteins that are sources of nutrients during embryonic development. The sequence is that of Vitellogenin from Penaeus merguiensis (Banana prawn).